The chain runs to 327 residues: MANNASLEQDQNHCSAINNSIPLTQGKLPTLTLSGKIRVTVTFFLFLLSTAFNASFLVKLQRWTQKRKKGKKLSRMKVLLKHLTLANLLETLIVMPLDGMWNITVQWYAGEFLCKVLSYLKLFSMYAPAFMMVVISLDRSLAVTQPLAVQSKSKLERSMTSLAWILSIVFAGPQLYIFRMIYLADGSGPAVFSQCVTHCSFPQWWHEAFYNFFTFSCLFIIPLLIMLICNAKIIFALTRVLHQDPRKLQLNQSKNNIPRARLRTLKMTVAFGTSFVICWTPYYVLGIWYWFDPEMLNRVSEPVNHFFFLFAFLNPCFDPLIYGYFSL.

Residues 1–38 are Extracellular-facing; that stretch reads MANNASLEQDQNHCSAINNSIPLTQGKLPTLTLSGKIR. Asn4 and Asn18 each carry an N-linked (GlcNAc...) asparagine glycan. A helical membrane pass occupies residues 39 to 58; it reads VTVTFFLFLLSTAFNASFLV. The Cytoplasmic segment spans residues 59-77; sequence KLQRWTQKRKKGKKLSRMK. The chain crosses the membrane as a helical span at residues 78–97; the sequence is VLLKHLTLANLLETLIVMPL. Topologically, residues 98-115 are extracellular; sequence DGMWNITVQWYAGEFLCK. Asn102 carries N-linked (GlcNAc...) asparagine glycosylation. Cysteines 114 and 195 form a disulfide. The helical transmembrane segment at 116 to 137 threads the bilayer; sequence VLSYLKLFSMYAPAFMMVVISL. Topologically, residues 138–164 are cytoplasmic; sequence DRSLAVTQPLAVQSKSKLERSMTSLAW. Residues 165–184 form a helical membrane-spanning segment; that stretch reads ILSIVFAGPQLYIFRMIYLA. Over 185-211 the chain is Extracellular; the sequence is DGSGPAVFSQCVTHCSFPQWWHEAFYN. Residues 212-231 form a helical membrane-spanning segment; that stretch reads FFTFSCLFIIPLLIMLICNA. Over 232–280 the chain is Cytoplasmic; that stretch reads KIIFALTRVLHQDPRKLQLNQSKNNIPRARLRTLKMTVAFGTSFVICWT. Residues 281–299 form a helical membrane-spanning segment; that stretch reads PYYVLGIWYWFDPEMLNRV. Residues 300–305 lie on the Extracellular side of the membrane; that stretch reads SEPVNH. The helical transmembrane segment at 306 to 325 threads the bilayer; sequence FFFLFAFLNPCFDPLIYGYF. The Cytoplasmic segment spans residues 326-327; sequence SL.

Belongs to the G-protein coupled receptor 1 family.

The protein resides in the cell membrane. Receptor for gonadotropin releasing hormone (GnRH) that mediates the action of GnRH to stimulate the secretion of the gonadotropic hormones luteinizing hormone (LH) and follicle-stimulating hormone (FSH). This receptor mediates its action by association with G-proteins that activate a phosphatidylinositol-calcium second messenger system. The chain is Gonadotropin-releasing hormone receptor (Gnrhr) from Rattus norvegicus (Rat).